A 418-amino-acid chain; its full sequence is Serine proteinase inhibitor 2.4 (418 aa).

The N-terminal stretch at 1-28 is a signal peptide; that stretch reads MAFIAALGIFMAGICPAVLCFPNGTLGR. 4 N-linked (GlcNAc...) asparagine glycosylation sites follow: Asn-23, Asn-38, Asn-104, and Asn-269.

This sequence belongs to the serpin family.

The protein resides in the secreted. This Apodemus sylvaticus (European woodmouse) protein is Serine proteinase inhibitor 2.4.